The sequence spans 259 residues: Polycomb group RING finger protein 1 (259 aa).

An N-acetylalanine modification is found at alanine 2. Residue serine 3 is modified to Phosphoserine. Residue lysine 24 forms a Glycyl lysine isopeptide (Lys-Gly) (interchain with G-Cter in SUMO2) linkage. Residues 47–86 form an RING-type zinc finger; it reads CCLCAGYFVDATTITECLHTFCKSCIVKYLQTSKYCPMCN. The segment at 86–247 is necessary for repressor activity; it reads NIKIHETQPL…LSRWFGKPSP (162 aa). Lysine 88 is covalently cross-linked (Glycyl lysine isopeptide (Lys-Gly) (interchain with G-Cter in SUMO2)). Residues 150 to 255 form a required for the interaction with the KDM2B-SKP1 heterodimeric complex region; it reads LPFSSFDHSK…SPLLLQYSVK (106 aa). The segment at 167 to 255 is RING-finger and WD40-associated ubiquitin-like domain (RAWUL); sufficient for interaction with BCOR and BCORL1; it reads EQLSLCLERL…SPLLLQYSVK (89 aa).

As to quaternary structure, interacts with BCORL1, forming heterodimers. The PCGF1-BCORL1 heterodimeric complex interacts with the KDM2B-SKP1 heterodimeric complex to form a homotetrameric polycomb repression complex 1 (PRC1.1). Component of the repressive BCOR complex containing a Polycomb group subcomplex at least composed of RYBP, RING1 and RNF2/RING2. Specifically interacts with BCOR, RING1 and RNF2/RING2. Component of a PRC1-like complex. Interacts with CBX6, CBX7 and CBX8. Interacts with DPPA4, NANOG, POU5F1 and RYBP.

Its subcellular location is the nucleus. Functionally, component of the Polycomb group (PcG) multiprotein BCOR complex, a complex required to maintain the transcriptionally repressive state of some genes, such as BCL6 and the cyclin-dependent kinase inhibitor, CDKN1A. Transcriptional repressor that may be targeted to the DNA by BCL6; this transcription repressor activity may be related to PKC signaling pathway. Represses CDKN1A expression by binding to its promoter, and this repression is dependent on the retinoic acid response element (RARE element). Promotes cell cycle progression and enhances cell proliferation as well. May have a positive role in tumor cell growth by down-regulating CDKN1A. Component of a Polycomb group (PcG) multiprotein PRC1-like complex, a complex class required to maintain the transcriptionally repressive state of many genes, including Hox genes, throughout development. PcG PRC1 complex acts via chromatin remodeling and modification of histones; it mediates monoubiquitination of histone H2A 'Lys-119', rendering chromatin heritably changed in its expressibility. Within the PRC1-like complex, regulates RNF2 ubiquitin ligase activity. Regulates the expression of DPPA4 and NANOG in the NT2 embryonic carcinoma cells. In Mus musculus (Mouse), this protein is Polycomb group RING finger protein 1 (Pcgf1).